Reading from the N-terminus, the 618-residue chain is MSARPQADFDGKAFAARLSTAPGVYRMYAADDSLLYVGKAGALRKRVGSYFNGTPKNARLTSMLSQVARMDVTVTRSEAEALLLENQLIKSLSPRYNVSLRDDKSYPYVLLTREDWPRIALHRGPRAVNGRYFGPYAGVTAVRETLNLMHKLFKLRSCEDSVFRNRSRPCLQYQIGRCSAPCVDLVAAQDYQEAVRRATMFLEGKSDQLGEEIMHSMQQASEALEFERAARLRDLLSSLRSMQNRQYVDGRAADLDVLACATQSSQACVLLLSFRDGRNLGTRSFFPKTNGEDSAEEILAAFVSQYYAEHAPPREILLDREIPDAELIEAALSAAAEHKVALKWNVRGERAGYLLLASRNAQLTLVTELTSQSAQHARSEALREMLGLAEQVKRVECFDISHTMGEATVASCVVFDASGPVRGQYRRFNISGITPGDDYAAMRQAIERRFRRAVEENGVLPDVLLIDGGAGQLAQAQAALADLGIENVLLVGVAKGEERRAGHEALILADGRELRPGAASPALQFIQQVRDEAHRFAITGHRGRRQKARMTSKLEDIPGIGPRRRASLLKHFGGLVGLKAAGEAEIARVEGVNAALAARIYANLHGLALPDAAGESSP.

Residues 20-98 (TAPGVYRMYA…IKSLSPRYNV (79 aa)) form the GIY-YIG domain. The 36-residue stretch at 207 to 242 (DQLGEEIMHSMQQASEALEFERAARLRDLLSSLRSM) folds into the UVR domain.

Belongs to the UvrC family. Interacts with UvrB in an incision complex.

The protein localises to the cytoplasm. Its function is as follows. The UvrABC repair system catalyzes the recognition and processing of DNA lesions. UvrC both incises the 5' and 3' sides of the lesion. The N-terminal half is responsible for the 3' incision and the C-terminal half is responsible for the 5' incision. This is UvrABC system protein C from Xanthomonas campestris pv. campestris (strain 8004).